Here is a 605-residue protein sequence, read N- to C-terminus: Xylan O-acetyltransferase 7 (605 aa).

Topologically, residues 1-124 (MKKKKNGMGA…AKQPSPRRTP (124 aa)) are cytoplasmic. Positions 86 to 126 (PCHLLPIQGQGQMQMQQRRKPPPAAAPVAAKQPSPRRTPGP) are disordered. A helical; Signal-anchor for type II membrane protein membrane pass occupies residues 125–145 (GPLSFAGALLSLLVVATFLYI). Over 146–605 (NDHGNMMPPH…LYAHIVAHAA (460 aa)) the chain is Lumenal. N-linked (GlcNAc...) asparagine glycosylation is found at asparagine 192 and asparagine 218. Cystine bridges form between cysteine 243/cysteine 296, cysteine 267/cysteine 332, cysteine 276/cysteine 584, and cysteine 499/cysteine 580. The GDS motif signature appears at 319–321 (GDS). The active-site Nucleophile is serine 321. N-linked (GlcNAc...) asparagine glycosylation is found at asparagine 351, asparagine 363, asparagine 471, and asparagine 508. The active-site Proton donor is the aspartate 579. A DXXH motif motif is present at residues 579–582 (DCIH). The active-site Proton acceptor is histidine 582.

Belongs to the PC-esterase family. TBL subfamily. In terms of tissue distribution, expressed in roots, leaves and stems.

It is found in the golgi apparatus membrane. Xylan acetyltransferase required for 2-O- and 3-O-monoacetylation of xylosyl residues in xylan. Catalyzes the 2-O-acetylation of xylan, followed by nonenzymatic acetyl migration to the O-3 position, resulting in products that are monoacetylated at both O-2 and O-3 positions. This Oryza sativa subsp. japonica (Rice) protein is Xylan O-acetyltransferase 7.